Reading from the N-terminus, the 644-residue chain is Arabinosyltransferase XEG113 (644 aa).

The Cytoplasmic portion of the chain corresponds to 1-17; the sequence is MVEGWRNGFRDATNSKP. Residues 18 to 38 form a helical; Signal-anchor for type II membrane protein membrane-spanning segment; sequence LFVTIYATVIIGVLVSSFYVF. Residues 39 to 644 lie on the Lumenal side of the membrane; that stretch reads SAIYSPTNGS…QTPEEDHPPL (606 aa). N-linked (GlcNAc...) asparagine glycans are attached at residues asparagine 46 and asparagine 70. Positions 226-228 match the DXD motif motif; the sequence is DTD. N-linked (GlcNAc...) asparagine glycans are attached at residues asparagine 446 and asparagine 542.

This sequence belongs to the glycosyltransferase 77 family.

The protein resides in the golgi apparatus membrane. Functionally, plays a role in the arabinosylation of cell wall components. Involved in the arabinosylation of extensin proteins in root hair cells. Extensins are structural glycoproteins present in cell walls and its arabinosylation is important for cell elongation, root hair cell development, lateral root development and root hair tip growth. In Arabidopsis thaliana (Mouse-ear cress), this protein is Arabinosyltransferase XEG113.